The chain runs to 132 residues: Transcription antitermination protein NusB (132 aa).

It belongs to the NusB family.

In terms of biological role, involved in transcription antitermination. Required for transcription of ribosomal RNA (rRNA) genes. Binds specifically to the boxA antiterminator sequence of the ribosomal RNA (rrn) operons. This is Transcription antitermination protein NusB from Campylobacter jejuni subsp. jejuni serotype O:6 (strain 81116 / NCTC 11828).